The chain runs to 820 residues: Protein phosphatase 1 regulatory subunit 29 (820 aa).

The first 22 residues, 1–22 (MLRLGLCAAALLCVCRPGAVRA), serve as a signal peptide directing secretion. Residues 23-397 (DCWLIEGDKG…APSTSTTTHY (375 aa)) lie on the Extracellular side of the membrane. Asn54 carries N-linked (GlcNAc...) asparagine glycosylation. LRR repeat units lie at residues 56-77 (TVHD…SLNR), 80-101 (NLTD…AFLG), 104-125 (SLQV…MLRG), 128-149 (RLQF…AFSE), and 152-173 (SLIS…TFAS). Asn80, Asn85, and Asn117 each carry an N-linked (GlcNAc...) asparagine glycan. The region spanning 185–247 (NPFNCECDLF…ITVLQAKCRN (63 aa)) is the LRRCT domain. Residues Asn205 and Asn247 are each glycosylated (N-linked (GlcNAc...) asparagine). Residues 250–294 (LPARPVSHPTPYSTDAQREPDENSGFNPDEILSVEPPASSTTDAS) form a disordered region. The Fibronectin type-III domain occupies 292–379 (DASAGPAIKL…FNHTCLTFTT (88 aa)). Residues 398–418 (IMTILGCLFGMVIVLGAVYYC) traverse the membrane as a helical segment. Topologically, residues 419 to 820 (LRKRRMQEEK…WKGVSAQQKL (402 aa)) are cytoplasmic. 2 disordered regions span residues 508–527 (GAGG…LENG) and 589–612 (SATG…SSHH). Phosphoserine is present on residues Ser619, Ser668, and Ser672. The segment at 654 to 677 (TGLAKGDSKYIEKGSPLNSPLDRL) is disordered.

In terms of assembly, interacts with PPP1CA.

The protein resides in the membrane. Inhibits phosphatase activity of protein phosphatase 1 (PP1) complexes. This chain is Protein phosphatase 1 regulatory subunit 29 (ELFN2), found in Homo sapiens (Human).